A 362-amino-acid chain; its full sequence is P2Y purinoceptor 1 (362 aa).

At 1 to 40 (MTEALISAALNGTQPELLAGGWAAGNATTKCSLTKTGFQF) the chain is on the extracellular side. Residues Asn-11 and Asn-26 are each glycosylated (N-linked (GlcNAc...) asparagine). Disulfide bonds link Cys-31–Cys-285 and Cys-113–Cys-191. Lys-35 provides a ligand contact to ADP. A helical transmembrane segment spans residues 41-63 (YYLPTVYILVFITGFLGNSVAIW). Residues 64–76 (MFVFHMRPWSGIS) are Cytoplasmic-facing. Residues 77-98 (VYMFNLALADFLYVLTLPALIF) traverse the membrane as a helical segment. Over 99–114 (YYFNKTDWIFGDVMCK) the chain is Extracellular. Asn-102 carries an N-linked (GlcNAc...) asparagine glycan. Residues 115–136 (LQRFIFHVNLYGSILFLTCISV) traverse the membrane as a helical segment. Residues 137–155 (HRYTGVVHPLKSLGRLKKK) are Cytoplasmic-facing. Residues 156–177 (NAVYVSSLVWALVVAVIAPILF) traverse the membrane as a helical segment. At 178-203 (YSGTGVRRNKTITCYDTTADEYLRSY) the chain is on the extracellular side. Asn-186 carries N-linked (GlcNAc...) asparagine glycosylation. 192-194 (YDT) contributes to the ADP binding site. Residues 204–226 (FVYSMCTTVFMFCIPFIVILGCY) traverse the membrane as a helical segment. The Cytoplasmic portion of the chain corresponds to 227–249 (GLIVKALIYKDLDNSPLRRKSIY). Residues 250 to 273 (LVIIVLTVFAVSYLPFHVMKTLNL) traverse the membrane as a helical segment. ADP is bound by residues 272-276 (NLRAR), 292-295 (YATY), and Arg-299. Topologically, residues 274-292 (RARLDFQTPQMCAFNDKVY) are extracellular. The chain crosses the membrane as a helical span at residues 293-314 (ATYQVTRGLASLNSCVDPILYF). At 315 to 362 (LAGDTFRRRLSRATRKSSRRSEPNVQSKSEEMTLNILTEYKQNGDTSL) the chain is on the cytoplasmic side.

Belongs to the G-protein coupled receptor 1 family. Brain, spinal cord, gastrointestinal tract, spleen and leg muscle. Is not detected in the heart, liver, stomach, lung and kidney.

It is found in the cell membrane. Its function is as follows. Receptor for extracellular adenine nucleotides such as ADP. In platelets, binding to ADP leads to mobilization of intracellular calcium ions via activation of phospholipase C, a change in platelet shape, and ultimately platelet aggregation. The chain is P2Y purinoceptor 1 (P2RY1) from Gallus gallus (Chicken).